A 130-amino-acid chain; its full sequence is S-adenosylmethionine decarboxylase proenzyme (130 aa).

Ser78 (schiff-base intermediate with substrate; via pyruvic acid) is an active-site residue. The residue at position 78 (Ser78) is a Pyruvic acid (Ser); by autocatalysis. Residue His83 is the Proton acceptor; for processing activity of the active site. Catalysis depends on Cys98, which acts as the Proton donor; for catalytic activity.

The protein belongs to the prokaryotic AdoMetDC family. Type 1 subfamily. As to quaternary structure, heterotetramer of two alpha and two beta chains arranged as a dimer of alpha/beta heterodimers. Pyruvate is required as a cofactor. In terms of processing, is synthesized initially as an inactive proenzyme. Formation of the active enzyme involves a self-maturation process in which the active site pyruvoyl group is generated from an internal serine residue via an autocatalytic post-translational modification. Two non-identical subunits are generated from the proenzyme in this reaction, and the pyruvate is formed at the N-terminus of the alpha chain, which is derived from the carboxyl end of the proenzyme. The post-translation cleavage follows an unusual pathway, termed non-hydrolytic serinolysis, in which the side chain hydroxyl group of the serine supplies its oxygen atom to form the C-terminus of the beta chain, while the remainder of the serine residue undergoes an oxidative deamination to produce ammonia and the pyruvoyl group blocking the N-terminus of the alpha chain.

The catalysed reaction is S-adenosyl-L-methionine + H(+) = S-adenosyl 3-(methylsulfanyl)propylamine + CO2. Its pathway is amine and polyamine biosynthesis; S-adenosylmethioninamine biosynthesis; S-adenosylmethioninamine from S-adenosyl-L-methionine: step 1/1. In terms of biological role, catalyzes the decarboxylation of S-adenosylmethionine to S-adenosylmethioninamine (dcAdoMet), the propylamine donor required for the synthesis of the polyamines spermine and spermidine from the diamine putrescine. The protein is S-adenosylmethionine decarboxylase proenzyme of Aeropyrum pernix (strain ATCC 700893 / DSM 11879 / JCM 9820 / NBRC 100138 / K1).